We begin with the raw amino-acid sequence, 226 residues long: Thiopurine S-methyltransferase (226 aa).

The S-adenosyl-L-methionine site is built by tryptophan 10, leucine 47, glutamate 68, and arginine 130.

The protein belongs to the class I-like SAM-binding methyltransferase superfamily. TPMT family.

It localises to the cytoplasm. The catalysed reaction is S-adenosyl-L-methionine + a thiopurine = S-adenosyl-L-homocysteine + a thiopurine S-methylether.. This is Thiopurine S-methyltransferase from Shewanella sediminis (strain HAW-EB3).